We begin with the raw amino-acid sequence, 346 residues long: Nicotinate-nucleotide--dimethylbenzimidazole phosphoribosyltransferase (346 aa).

The active-site Proton acceptor is the E312.

This sequence belongs to the CobT family.

It carries out the reaction 5,6-dimethylbenzimidazole + nicotinate beta-D-ribonucleotide = alpha-ribazole 5'-phosphate + nicotinate + H(+). Its pathway is nucleoside biosynthesis; alpha-ribazole biosynthesis; alpha-ribazole from 5,6-dimethylbenzimidazole: step 1/2. Its function is as follows. Catalyzes the synthesis of alpha-ribazole-5'-phosphate from nicotinate mononucleotide (NAMN) and 5,6-dimethylbenzimidazole (DMB). The chain is Nicotinate-nucleotide--dimethylbenzimidazole phosphoribosyltransferase from Cupriavidus taiwanensis (strain DSM 17343 / BCRC 17206 / CCUG 44338 / CIP 107171 / LMG 19424 / R1) (Ralstonia taiwanensis (strain LMG 19424)).